The primary structure comprises 313 residues: tRNA dimethylallyltransferase (313 aa).

17–24 (GPTASGKT) provides a ligand contact to ATP. Residue 19–24 (TASGKT) participates in substrate binding. Interaction with substrate tRNA stretches follow at residues 42–45 (DSAL), 166–170 (QRLSR), and 247–252 (RCVGYR).

This sequence belongs to the IPP transferase family. Monomer. Requires Mg(2+) as cofactor.

It carries out the reaction adenosine(37) in tRNA + dimethylallyl diphosphate = N(6)-dimethylallyladenosine(37) in tRNA + diphosphate. Catalyzes the transfer of a dimethylallyl group onto the adenine at position 37 in tRNAs that read codons beginning with uridine, leading to the formation of N6-(dimethylallyl)adenosine (i(6)A). This Pectobacterium atrosepticum (strain SCRI 1043 / ATCC BAA-672) (Erwinia carotovora subsp. atroseptica) protein is tRNA dimethylallyltransferase.